The chain runs to 474 residues: Tumor necrosis factor receptor superfamily member 1B (474 aa).

Residues 1–22 (MAPAALWVALVFELQLWATGHT) form the signal peptide. The Extracellular portion of the chain corresponds to 23–258 (VPAQVVLTPY…PIIEQSTKGG (236 aa)). Thr-30 is a glycosylation site (O-linked (GalNAc...) threonine). 4 TNFR-Cys repeats span residues 39 to 77 (ECQISQEYYDRKAQMCCAKCPPGQYVKHFCNKTSDTVCA), 78 to 119 (DCEA…NRVC), 120 to 164 (ACEA…VLCK), and 165 to 203 (ACAPGTFSDTTSSTDVCRPHRICSILAIPGNASTDAVCA). Disulfide bonds link Cys-40–Cys-54, Cys-55–Cys-68, Cys-58–Cys-76, Cys-79–Cys-94, Cys-97–Cys-111, Cys-101–Cys-119, Cys-121–Cys-127, Cys-136–Cys-145, Cys-139–Cys-163, and Cys-166–Cys-181. N-linked (GlcNAc...) asparagine glycosylation occurs at Asn-69. A glycan (N-linked (GlcNAc...) asparagine) is linked at Asn-195. Residues Thr-208 and Thr-224 are each glycosylated (O-linked (GalNAc...) threonine). The interval 220-243 (QPEPTRSQPLDQEPGPSQTPSILT) is disordered. The helical transmembrane segment at 259–288 (ISLPIGLIVGVTSLGLLMLGLVNCIILVQR) threads the bilayer. Residues 289-474 (KKKPSCLQRD…WFDQIAVKVA (186 aa)) are Cytoplasmic-facing. Disordered stretches follow at residues 295–314 (LQRDAKVPHVPDEKSQDAVG), 321–378 (LTTA…GSHG), and 397–463 (SQCS…PSQA). The span at 297–310 (RDAKVPHVPDEKSQ) shows a compositional bias: basic and acidic residues. Low complexity-rich tracts occupy residues 324 to 338 (APSSSSSSLESSASA) and 363 to 378 (ARASSRISDSSHGSHG). The residue at position 331 (Ser-331) is a Phosphoserine. Over residues 429-442 (ECPSQSPCETTETL) the composition is skewed to polar residues.

Binds to TRAF2. Interacts with BMX. Interacts (activated form) with XPNPEP3.

The protein resides in the membrane. In terms of biological role, receptor with high affinity for TNFSF2/TNF-alpha and approximately 5-fold lower affinity for homotrimeric TNFSF1/lymphotoxin-alpha. The TRAF1/TRAF2 complex recruits the apoptotic suppressors BIRC2 and BIRC3 to TNFRSF1B/TNFR2. This is Tumor necrosis factor receptor superfamily member 1B (Tnfrsf1b) from Mus musculus (Mouse).